The chain runs to 42 residues: Proline-rich antimicrobial peptide 2 (42 aa).

In terms of tissue distribution, hemolymph.

The protein localises to the secreted. Its function is as follows. Antimicrobial protein. Has antibacterial activity against the Gram-positive bacterium M.luteus (MIC=8.6 uM). Lacks antibacterial activity against the Gram-positive bacteria B.circulans, L.monocytogenes, S.aureus, and S.lutea, and the Gram-negative bacteria E.coli D31, E.coli ATCC 25922, and S.typhimurium. Lacks antifungal activity against S.cerevisiae, P.pastoris, Z.marxianus, C.albicans, C.fructus, C.wickerhamii, A.niger, F.oxysporum, and T.harizianum. The polypeptide is Proline-rich antimicrobial peptide 2 (Galleria mellonella (Greater wax moth)).